A 431-amino-acid chain; its full sequence is Glutamyl-tRNA reductase (431 aa).

Substrate contacts are provided by residues 49 to 52, Ser-109, 114 to 116, and Gln-120; these read TCNR and EGQ. The active-site Nucleophile is the Cys-50. Position 189–194 (189–194) interacts with NADP(+); that stretch reads GAGKMS.

Belongs to the glutamyl-tRNA reductase family. In terms of assembly, homodimer.

The catalysed reaction is (S)-4-amino-5-oxopentanoate + tRNA(Glu) + NADP(+) = L-glutamyl-tRNA(Glu) + NADPH + H(+). It functions in the pathway porphyrin-containing compound metabolism; protoporphyrin-IX biosynthesis; 5-aminolevulinate from L-glutamyl-tRNA(Glu): step 1/2. Its pathway is porphyrin-containing compound metabolism; chlorophyll biosynthesis. Catalyzes the NADPH-dependent reduction of glutamyl-tRNA(Glu) to glutamate 1-semialdehyde (GSA). This is Glutamyl-tRNA reductase from Trichodesmium erythraeum (strain IMS101).